The following is a 246-amino-acid chain: ATP synthase subunit a (246 aa).

The propeptide at 1–3 (MIY) is removed in mature form. Helical transmembrane passes span 25 to 45 (VNNYVMYVALVVTLMYSSVFL), 51 to 71 (LGFNRWGVALLAVYDTILNMV), 79 to 99 (GGMYFPFMFTLFTFMLVANLV), 112 to 132 (LVAIVSFSLSLWFGCVLMGLS), 138 to 158 (FFALFVPGGTPLALVPVLVLI), 178 to 198 (VLSGHLLMLILGTLMFNLMGS), and 203 to 223 (FMGGFMPVMGVIAIVVTEFAI).

This sequence belongs to the ATPase A chain family. F-type ATPases have 2 components, CF(1) - the catalytic core - and CF(0) - the membrane proton channel. CF(1) has five subunits: alpha(3), beta(3), gamma(1), delta(1), epsilon(1). CF(0) has three main subunits: a, b and c.

It is found in the mitochondrion inner membrane. In terms of biological role, mitochondrial membrane ATP synthase (F(1)F(0) ATP synthase or Complex V) produces ATP from ADP in the presence of a proton gradient across the membrane which is generated by electron transport complexes of the respiratory chain. F-type ATPases consist of two structural domains, F(1) - containing the extramembraneous catalytic core and F(0) - containing the membrane proton channel, linked together by a central stalk and a peripheral stalk. During catalysis, ATP synthesis in the catalytic domain of F(1) is coupled via a rotary mechanism of the central stalk subunits to proton translocation. Key component of the proton channel; it may play a direct role in the translocation of protons across the membrane. The sequence is that of ATP synthase subunit a (ATP6) from Debaryomyces hansenii (strain ATCC 36239 / CBS 767 / BCRC 21394 / JCM 1990 / NBRC 0083 / IGC 2968) (Yeast).